A 350-amino-acid polypeptide reads, in one-letter code: Lipoyl synthase, mitochondrial (350 aa).

The [4Fe-4S] cluster site is built by C83, C88, C94, C113, C117, C120, and S328. Residues 96-317 enclose the Radical SAM core domain; sequence GGESGTATAT…EKVGNELGFA (222 aa).

The protein belongs to the radical SAM superfamily. Lipoyl synthase family. The cofactor is [4Fe-4S] cluster.

The protein resides in the mitochondrion. The catalysed reaction is [[Fe-S] cluster scaffold protein carrying a second [4Fe-4S](2+) cluster] + N(6)-octanoyl-L-lysyl-[protein] + 2 oxidized [2Fe-2S]-[ferredoxin] + 2 S-adenosyl-L-methionine + 4 H(+) = [[Fe-S] cluster scaffold protein] + N(6)-[(R)-dihydrolipoyl]-L-lysyl-[protein] + 4 Fe(3+) + 2 hydrogen sulfide + 2 5'-deoxyadenosine + 2 L-methionine + 2 reduced [2Fe-2S]-[ferredoxin]. It functions in the pathway protein modification; protein lipoylation via endogenous pathway; protein N(6)-(lipoyl)lysine from octanoyl-[acyl-carrier-protein]: step 2/2. Functionally, catalyzes the radical-mediated insertion of two sulfur atoms into the C-6 and C-8 positions of the octanoyl moiety bound to the lipoyl domains of lipoate-dependent enzymes, thereby converting the octanoylated domains into lipoylated derivatives. The protein is Lipoyl synthase, mitochondrial of Trichoplax adhaerens (Trichoplax reptans).